Consider the following 21-residue polypeptide: uncharacterized protein (21 aa).

This is an uncharacterized protein from Haemophilus influenzae (strain ATCC 51907 / DSM 11121 / KW20 / Rd).